The following is a 450-amino-acid chain: ATP-dependent protease ATPase subunit HslU (450 aa).

Residues Val-29, Gly-71 to Glu-76, Asp-261, Glu-328, and Arg-400 contribute to the ATP site.

Belongs to the ClpX chaperone family. HslU subfamily. In terms of assembly, a double ring-shaped homohexamer of HslV is capped on each side by a ring-shaped HslU homohexamer. The assembly of the HslU/HslV complex is dependent on binding of ATP.

It is found in the cytoplasm. Functionally, ATPase subunit of a proteasome-like degradation complex; this subunit has chaperone activity. The binding of ATP and its subsequent hydrolysis by HslU are essential for unfolding of protein substrates subsequently hydrolyzed by HslV. HslU recognizes the N-terminal part of its protein substrates and unfolds these before they are guided to HslV for hydrolysis. In Rickettsia rickettsii (strain Iowa), this protein is ATP-dependent protease ATPase subunit HslU.